A 283-amino-acid polypeptide reads, in one-letter code: Phosphatidylserine decarboxylase proenzyme (283 aa).

Residues aspartate 96, histidine 152, and serine 250 each act as charge relay system; for autoendoproteolytic cleavage activity in the active site. Catalysis depends on serine 250, which acts as the Schiff-base intermediate with substrate; via pyruvic acid; for decarboxylase activity. Serine 250 bears the Pyruvic acid (Ser); by autocatalysis mark.

Belongs to the phosphatidylserine decarboxylase family. PSD-B subfamily. Prokaryotic type I sub-subfamily. Heterodimer of a large membrane-associated beta subunit and a small pyruvoyl-containing alpha subunit. Pyruvate serves as cofactor. Is synthesized initially as an inactive proenzyme. Formation of the active enzyme involves a self-maturation process in which the active site pyruvoyl group is generated from an internal serine residue via an autocatalytic post-translational modification. Two non-identical subunits are generated from the proenzyme in this reaction, and the pyruvate is formed at the N-terminus of the alpha chain, which is derived from the carboxyl end of the proenzyme. The autoendoproteolytic cleavage occurs by a canonical serine protease mechanism, in which the side chain hydroxyl group of the serine supplies its oxygen atom to form the C-terminus of the beta chain, while the remainder of the serine residue undergoes an oxidative deamination to produce ammonia and the pyruvoyl prosthetic group on the alpha chain. During this reaction, the Ser that is part of the protease active site of the proenzyme becomes the pyruvoyl prosthetic group, which constitutes an essential element of the active site of the mature decarboxylase.

The protein localises to the cell membrane. The catalysed reaction is a 1,2-diacyl-sn-glycero-3-phospho-L-serine + H(+) = a 1,2-diacyl-sn-glycero-3-phosphoethanolamine + CO2. It functions in the pathway phospholipid metabolism; phosphatidylethanolamine biosynthesis; phosphatidylethanolamine from CDP-diacylglycerol: step 2/2. In terms of biological role, catalyzes the formation of phosphatidylethanolamine (PtdEtn) from phosphatidylserine (PtdSer). This is Phosphatidylserine decarboxylase proenzyme from Acinetobacter baumannii (strain ATCC 17978 / DSM 105126 / CIP 53.77 / LMG 1025 / NCDC KC755 / 5377).